The primary structure comprises 475 residues: Putative aldehyde dehydrogenase (475 aa).

NAD(+) is bound by residues 146 to 147 (WN) and 223 to 224 (GS). Glutamate 245 (proton acceptor) is an active-site residue. Leucine 246 lines the NAD(+) pocket. The active-site Nucleophile is the cysteine 279. Glutamate 379 lines the NAD(+) pocket.

This sequence belongs to the aldehyde dehydrogenase family.

The enzyme catalyses an aldehyde + NAD(+) + H2O = a carboxylate + NADH + 2 H(+). This chain is Putative aldehyde dehydrogenase, found in Staphylococcus aureus (strain USA300).